The chain runs to 467 residues: Asparagine--tRNA ligase (467 aa).

Belongs to the class-II aminoacyl-tRNA synthetase family. In terms of assembly, homodimer.

The protein localises to the cytoplasm. It carries out the reaction tRNA(Asn) + L-asparagine + ATP = L-asparaginyl-tRNA(Asn) + AMP + diphosphate + H(+). This Histophilus somni (strain 2336) (Haemophilus somnus) protein is Asparagine--tRNA ligase.